We begin with the raw amino-acid sequence, 97 residues long: Protein S100-A10 (97 aa).

4 positions are modified to N6-acetyllysine: lysine 23, lysine 28, lysine 54, and lysine 57. In terms of domain architecture, EF-hand spans 47 to 82 (KDPLAVDKIMKDLDQCRDGKVGFQSFLSLVAGLTIA). An ancestral calcium site region spans residues 60-71 (DQCRDGKVGFQS).

This sequence belongs to the S-100 family. Heterotetramer containing 2 light chains of S100A10/p11 and 2 heavy chains of ANXA2/p36. Interacts with SCN10A. Interacts with TASOR.

Because S100A10 induces the dimerization of ANXA2/p36, it may function as a regulator of protein phosphorylation in that the ANXA2 monomer is the preferred target (in vitro) of tyrosine-specific kinase. The sequence is that of Protein S100-A10 (S100a10) from Mus musculus (Mouse).